The chain runs to 929 residues: Probable LRR receptor-like serine/threonine-protein kinase At1g67720 (929 aa).

The signal sequence occupies residues 1–21 (MGLCLAQLAVTCLFLVPFVLS). Topologically, residues 22–531 (QVTEFVSIDC…NEAQRKHFWQ (510 aa)) are extracellular. 7 N-linked (GlcNAc...) asparagine glycosylation sites follow: Asn36, Asn173, Asn236, Asn293, Asn320, Asn332, and Asn407. LRR repeat units lie at residues 413 to 437 (PPRVTKIALSRKNLRGEIPPGINYM), 438 to 460 (EALTELWLDDNELTGTLPDMSKL), 461 to 484 (VNLKIMHLENNQLSGSLPPYLAHL), and 485 to 508 (PNLQELSIENNSFKGKIPSALLKG). Asn494 carries N-linked (GlcNAc...) asparagine glycosylation. A helical membrane pass occupies residues 532–552 (ILGISIAAVAILLLLVGGSLV). Over 553 to 929 (LLCALRKTKR…SRNSLAPAAR (377 aa)) the chain is Cytoplasmic. Residues 606 to 880 (DNFSKKVGRG…EVIVAIQDAI (275 aa)) enclose the Protein kinase domain. Residues 612–620 (VGRGSFGSV) and Lys634 each bind ATP. Phosphotyrosine is present on Tyr679. Asp731 functions as the Proton acceptor in the catalytic mechanism. Phosphoserine occurs at positions 735 and 764. At Thr770 the chain carries Phosphothreonine. Position 778 is a phosphotyrosine (Tyr778).

The protein belongs to the protein kinase superfamily. Ser/Thr protein kinase family.

Its subcellular location is the membrane. The enzyme catalyses L-seryl-[protein] + ATP = O-phospho-L-seryl-[protein] + ADP + H(+). The catalysed reaction is L-threonyl-[protein] + ATP = O-phospho-L-threonyl-[protein] + ADP + H(+). The polypeptide is Probable LRR receptor-like serine/threonine-protein kinase At1g67720 (Arabidopsis thaliana (Mouse-ear cress)).